Consider the following 162-residue polypeptide: Protein NrdI (162 aa).

It belongs to the NrdI family.

Probably involved in ribonucleotide reductase function. This is Protein NrdI from Streptococcus pyogenes serotype M3 (strain ATCC BAA-595 / MGAS315).